Reading from the N-terminus, the 206-residue chain is Pro-glucagon (206 aa).

An N-terminal signal peptide occupies residues 1–22 (MKMKSIYFIAGLLLMIVQGSWQ). A disordered region spans residues 27–57 (DTEEKSRSFKASQSEPLDESRQLNEVKRHSQ). A compositionally biased stretch (basic and acidic residues) spans 44-54 (DESRQLNEVKR). A propeptide spanning residues 86-109 (NGQQGQEDKENDKFPDQLSSNAIS) is cleaved from the precursor. At Arg147 the chain carries Arginine amide. 2 propeptides span residues 151–163 (DFPE…EEMG) and 199–206 (RDLLGEYQ).

Belongs to the glucagon family. In terms of processing, proglucagon is post-translationally processed in a tissue-specific manner in pancreatic A cells and intestinal L cells. In pancreatic A cells, the major bioactive hormone is glucagon cleaved by PCSK2/PC2. In the intestinal L cells PCSK1/PC1 liberates GLP-1 and GLP-2. GLP-1 is further N-terminally truncated by post-translational processing in the intestinal L cells resulting in GLP-1(7-37) GLP-1-(7-36)amide.

The protein resides in the secreted. Its function is as follows. Plays a key role in glucose metabolism and homeostasis. Regulates blood glucose by increasing gluconeogenesis and decreasing glycolysis. In terms of biological role, potent stimulator of glucose-dependent insulin release. Plays important roles on gastric motility and the suppression of plasma glucagon levels. May be involved in the suppression of satiety and stimulation of glucose disposal in peripheral tissues, independent of the actions of insulin. Has growth-promoting activities on intestinal epithelium. May also regulate the hypothalamic pituitary axis (HPA) via effects on LH, TSH, CRH, oxytocin, and vasopressin secretion. Increases islet mass through stimulation of islet neogenesis and pancreatic beta cell proliferation. Stimulates intestinal growth and up-regulates villus height in the small intestine, concomitant with increased crypt cell proliferation and decreased enterocyte apoptosis. The gastrointestinal tract, from the stomach to the colon is the principal target for GLP-2 action. Plays a key role in nutrient homeostasis, enhancing nutrient assimilation through enhanced gastrointestinal function, as well as increasing nutrient disposal. Stimulates intestinal glucose transport and decreases mucosal permeability. The sequence is that of Pro-glucagon (GCG) from Gallus gallus (Chicken).